A 1106-amino-acid polypeptide reads, in one-letter code: Protein shuttle craft (1106 aa).

Disordered stretches follow at residues 7–26 (QLTNGAGEAGPGNESSAMAD) and 189–371 (PAAA…KLSQ). Positions 189–201 (PAAATTNGNSTAS) are enriched in low complexity. 2 stretches are compositionally biased toward basic and acidic residues: residues 232-270 (NYERERERERDRDRDRERDRDRDRDRDRDRDRDRDRDSR) and 278-323 (RRSD…RDRI). At Thr335 the chain carries Phosphothreonine. Phosphoserine is present on residues Ser336, Ser339, Ser343, and Ser354. The span at 336–354 (SNESAHPSPEKQSQLQQIS) shows a compositional bias: polar residues. The RING-type; atypical zinc-finger motif lies at 386 to 433 (CLVCVEAIKSHQPTWSCRNCYHMLHLKCTITWASSSKSEVGWRCPACQ). 8 NF-X1-type zinc fingers span residues 474-492 (CSHACTLLCHPGPCPPCQA), 527-546 (CGEHRCQAECHSGKCAACSE), 585-604 (CGHHKCKDSCHAGSCRPCKL), 644-667 (CGKPAHPHQCGSKCHLGQCPPCPK), 706-725 (CGKHKCNVECCIDIDHDCPL), 733-752 (CGKHKCDQPCHRGNCPPCYR), 844-867 (CGGHKCIKPCHEGPCQSAGEICRQ), and 876-896 (CGHKCAAACHEGACPETPCKE). Residues 1006–1071 (TKSVYETLTD…NRNVVATAHK (66 aa)) enclose the R3H domain.

The protein belongs to the NFX1 family. In terms of tissue distribution, ovaries and embryonic central nervous system.

It is found in the nucleus. Plays an essential role during the late stages of embryonic neurogenesis. May either fine-tune the guidance or the spatial maintenance of the migrating SNB and in nerve roots, which are composed of axons originating from distinct groups of motor neurons and may be required to either guide or maintain the position of these nerves along a direct and straight path to their ultimate targets in particular muscle fields. May play a role in egg chamber development and/or may confer essential maternal contributions to the early embryo. The polypeptide is Protein shuttle craft (stc) (Drosophila melanogaster (Fruit fly)).